The sequence spans 246 residues: Dihydroorotate dehydrogenase B (NAD(+)), electron transfer subunit (246 aa).

In terms of domain architecture, FAD-binding FR-type spans 3–97; it reads EKYTVEKVYE…TGPLGNGFNV (95 aa). FAD is bound by residues 50 to 53 and 72 to 73; these read RPIS and GT. The [2Fe-2S] cluster site is built by Cys-211, Cys-216, Cys-219, and Cys-231.

Belongs to the PyrK family. As to quaternary structure, heterotetramer of 2 PyrK and 2 PyrD type B subunits. [2Fe-2S] cluster serves as cofactor. The cofactor is FAD.

Its pathway is pyrimidine metabolism; UMP biosynthesis via de novo pathway; orotate from (S)-dihydroorotate (NAD(+) route): step 1/1. Responsible for channeling the electrons from the oxidation of dihydroorotate from the FMN redox center in the PyrD type B subunit to the ultimate electron acceptor NAD(+). The chain is Dihydroorotate dehydrogenase B (NAD(+)), electron transfer subunit from Clostridium acetobutylicum (strain ATCC 824 / DSM 792 / JCM 1419 / IAM 19013 / LMG 5710 / NBRC 13948 / NRRL B-527 / VKM B-1787 / 2291 / W).